A 169-amino-acid polypeptide reads, in one-letter code: Secretory-abundant heat soluble protein 1 (169 aa).

The first 19 residues, 1 to 19 (MSRAAVAIALLGCVVAAYG), serve as a signal peptide directing secretion. Residues 31–60 (EWTGKSWMGKWESTDRIENFDAFISALGLP) form an SAHS-c1 region. Positions 75–103 (WKEGDHYHHQISVPDKNYKNDVNFKLNEE) are SAHS-c2. N109 carries an N-linked (GlcNAc...) asparagine glycan. Positions 116-165 (KYTEDGGNLKAEVHVPSRNKVIHDEYKVNGDELEKTYKVGDVTAKRWYKK) are SAHS-c3.

Belongs to the Secretory-abundant heat soluble protein (SAHS) family.

The protein localises to the secreted. Functionally, secreted heat soluble protein acting as a molecular shield in water-deficient condition. Tardigrade-specific intrinsically disordered proteins (TDPs) are essential for desiccation tolerance by forming non-crystalline amorphous solids upon desiccation, and this vitrified state mirrors their protective capabilities. The protein is Secretory-abundant heat soluble protein 1 of Ramazzottius varieornatus (Water bear).